The chain runs to 66 residues: UPF0370 protein YpfN (66 aa).

The chain crosses the membrane as a helical span at residues 4-24 (LAKYWWILVLVFLVGVLLNVI). Residues 39–66 (KPELPPHRDFNDKWDDEDGWPKKDQPKK) are disordered. Basic and acidic residues predominate over residues 42 to 66 (LPPHRDFNDKWDDEDGWPKKDQPKK).

It belongs to the UPF0370 family.

It localises to the cell membrane. This is UPF0370 protein YpfN from Salmonella paratyphi B (strain ATCC BAA-1250 / SPB7).